Reading from the N-terminus, the 546-residue chain is Probable sucrose-6-phosphate hydrolase (546 aa).

Residues 105-108 (LLND), glutamine 124, 167-168 (FS), 228-229 (RD), and glutamate 283 contribute to the substrate site. Residue aspartate 108 is part of the active site.

The protein belongs to the glycosyl hydrolase 32 family.

The protein localises to the cytoplasm. It carries out the reaction Hydrolysis of terminal non-reducing beta-D-fructofuranoside residues in beta-D-fructofuranosides.. The protein operates within glycan biosynthesis; sucrose metabolism. Functionally, enables the bacterium to metabolize sucrose as a sole carbon source. The polypeptide is Probable sucrose-6-phosphate hydrolase (Vibrio cholerae).